Consider the following 161-residue polypeptide: Ribosome maturation factor RimP (161 aa).

It belongs to the RimP family.

It localises to the cytoplasm. Required for maturation of 30S ribosomal subunits. This is Ribosome maturation factor RimP from Rickettsia felis (strain ATCC VR-1525 / URRWXCal2) (Rickettsia azadi).